Reading from the N-terminus, the 53-residue chain is Cytochrome c oxidase subunit 7e (53 aa).

Slime mold cytochrome c oxidase consists of at least seven different polypeptides species, subunits I, II, III, IV, V, VI, and VIIe/s in order of MW.

The protein localises to the mitochondrion inner membrane. It catalyses the reaction 4 Fe(II)-[cytochrome c] + O2 + 8 H(+)(in) = 4 Fe(III)-[cytochrome c] + 2 H2O + 4 H(+)(out). This protein is one of the nuclear-coded polypeptide chains of cytochrome c oxidase, the terminal oxidase in mitochondrial electron transport. In Dictyostelium discoideum (Social amoeba), this protein is Cytochrome c oxidase subunit 7e (cxgE).